A 144-amino-acid chain; its full sequence is Cytochrome c3 (144 aa).

Residues 1–24 (MRYLVISLFAVSLLMAGSALVGNA) form the signal peptide. Residues H51, H54, C59, C62, H63, H64, C76, C81, H82, H100, C108, C111, H112, C125, C128, and H129 each contribute to the heme c site.

The protein belongs to the cytochrome c family. In terms of assembly, homodimer. Heterotrimer of cytochrome c3 FDH2C and formate dehydrogenase FDH2 alpha and beta subunits that forms the FdhABC(3) complex. In terms of processing, binds 4 heme c groups per subunit.

It is found in the periplasm. Its function is as follows. Participates in sulfate respiration coupled with phosphorylation by transferring electrons from the enzyme dehydrogenase to ferredoxin. Gamma chain of the formate dehydrogenase (FDH) that catalyzes the reversible two-electron oxidation of formate to carbon dioxide. The gamma subunit of formate dehydrogenase forms a c-type heme. The sequence is that of Cytochrome c3 from Nitratidesulfovibrio vulgaris (strain ATCC 29579 / DSM 644 / CCUG 34227 / NCIMB 8303 / VKM B-1760 / Hildenborough) (Desulfovibrio vulgaris).